Reading from the N-terminus, the 375-residue chain is Succinyl-diaminopimelate desuccinylase (375 aa).

Residue His66 coordinates Zn(2+). Asp68 is an active-site residue. Asp99 contacts Zn(2+). The active-site Proton acceptor is Glu133. Residues Glu134, Glu162, and His348 each coordinate Zn(2+).

This sequence belongs to the peptidase M20A family. DapE subfamily. Homodimer. The cofactor is Zn(2+). Co(2+) is required as a cofactor.

The catalysed reaction is N-succinyl-(2S,6S)-2,6-diaminopimelate + H2O = (2S,6S)-2,6-diaminopimelate + succinate. It participates in amino-acid biosynthesis; L-lysine biosynthesis via DAP pathway; LL-2,6-diaminopimelate from (S)-tetrahydrodipicolinate (succinylase route): step 3/3. Catalyzes the hydrolysis of N-succinyl-L,L-diaminopimelic acid (SDAP), forming succinate and LL-2,6-diaminopimelate (DAP), an intermediate involved in the bacterial biosynthesis of lysine and meso-diaminopimelic acid, an essential component of bacterial cell walls. The chain is Succinyl-diaminopimelate desuccinylase from Escherichia coli O1:K1 / APEC.